Reading from the N-terminus, the 480-residue chain is Proline--tRNA ligase (480 aa).

The protein belongs to the class-II aminoacyl-tRNA synthetase family. ProS type 3 subfamily. In terms of assembly, homodimer.

Its subcellular location is the cytoplasm. It catalyses the reaction tRNA(Pro) + L-proline + ATP = L-prolyl-tRNA(Pro) + AMP + diphosphate. Its function is as follows. Catalyzes the attachment of proline to tRNA(Pro) in a two-step reaction: proline is first activated by ATP to form Pro-AMP and then transferred to the acceptor end of tRNA(Pro). The protein is Proline--tRNA ligase of Chloroflexus aurantiacus (strain ATCC 29364 / DSM 637 / Y-400-fl).